The chain runs to 35 residues: Dermonecrotic toxin LgSicTox-beta-LOXN4 (35 aa).

D20 serves as a coordination point for Mg(2+).

Belongs to the arthropod phospholipase D family. Class II subfamily. Mg(2+) is required as a cofactor. Post-translationally, contains 2 disulfide bonds. As to expression, expressed by the venom gland.

The protein localises to the secreted. The enzyme catalyses an N-(acyl)-sphingosylphosphocholine = an N-(acyl)-sphingosyl-1,3-cyclic phosphate + choline. It carries out the reaction an N-(acyl)-sphingosylphosphoethanolamine = an N-(acyl)-sphingosyl-1,3-cyclic phosphate + ethanolamine. It catalyses the reaction a 1-acyl-sn-glycero-3-phosphocholine = a 1-acyl-sn-glycero-2,3-cyclic phosphate + choline. The catalysed reaction is a 1-acyl-sn-glycero-3-phosphoethanolamine = a 1-acyl-sn-glycero-2,3-cyclic phosphate + ethanolamine. Dermonecrotic toxins cleave the phosphodiester linkage between the phosphate and headgroup of certain phospholipids (sphingolipid and lysolipid substrates), forming an alcohol (often choline) and a cyclic phosphate. This toxin acts on sphingomyelin (SM). It may also act on ceramide phosphoethanolamine (CPE), lysophosphatidylcholine (LPC) and lysophosphatidylethanolamine (LPE), but not on lysophosphatidylserine (LPS), and lysophosphatidylglycerol (LPG). It acts by transphosphatidylation, releasing exclusively cyclic phosphate products as second products. Induces dermonecrosis, hemolysis, increased vascular permeability, edema, inflammatory response, and platelet aggregation. This Loxosceles gaucho (Spider) protein is Dermonecrotic toxin LgSicTox-beta-LOXN4.